The chain runs to 190 residues: uncharacterized protein (190 aa).

This is an uncharacterized protein from Aquifex aeolicus (strain VF5).